A 330-amino-acid polypeptide reads, in one-letter code: Stearoyl-CoA desaturase 5 (330 aa).

The Cytoplasmic segment spans residues 1 to 49 (MPGPATDAGKIPFCDAKEEIRAGLESSEGGGGPERPGARGQRQNIVWRN). Residue Asn49 participates in substrate binding. The helical transmembrane segment at 50–70 (VVLMSLLHLGAVYSLVLIPKA) threads the bilayer. Residues 71 to 72 (KP) are Lumenal-facing. A helical transmembrane segment spans residues 73–93 (LTLLWAYFCFLLAALGVTAGA). His94 and His99 together coordinate Fe cation. Residues 94 to 99 (HRLWSH) carry the Histidine box-1 motif. The Cytoplasmic segment spans residues 94–193 (HRLWSHRSYR…VVRIQRKYYK (100 aa)). Asn122, Arg129, and Asp130 together coordinate substrate. 3 residues coordinate Fe cation: His131, His134, and His135. The short motif at 131–135 (HRAHH) is the Histidine box-2 element. The substrate site is built by Arg162 and Lys163. Residues 194–214 (ISVVLMCFVVPTLVPWYIWGE) traverse the membrane as a helical segment. Ser215 is a topological domain (lumenal). Residues 216-238 (LWNSYFLASILRYTISLNISWLV) form a helical membrane-spanning segment. Residue Trp236 coordinates substrate. Over 239-330 (NSAAHMYGNR…RKARTGDSSA (92 aa)) the chain is Cytoplasmic. Fe cation contacts are provided by His243, His272, His275, and His276. The short motif at 272–276 (HNYHH) is the Histidine box-3 element.

Belongs to the fatty acid desaturase type 1 family. As to quaternary structure, may self-associate and form homodimers. The cofactor is Fe(2+). Detected in fetal brain, and at lower levels in fetal kidney. Detected in adult brain and pancreas, and at lower levels in kidney and lung. Expressed in spiral ganglion cells and the organ of Corti of fetal cochlea.

It localises to the endoplasmic reticulum membrane. The catalysed reaction is octadecanoyl-CoA + 2 Fe(II)-[cytochrome b5] + O2 + 2 H(+) = (9Z)-octadecenoyl-CoA + 2 Fe(III)-[cytochrome b5] + 2 H2O. It carries out the reaction hexadecanoyl-CoA + 2 Fe(II)-[cytochrome b5] + O2 + 2 H(+) = (9Z)-hexadecenoyl-CoA + 2 Fe(III)-[cytochrome b5] + 2 H2O. Its function is as follows. Stearoyl-CoA desaturase that utilizes O(2) and electrons from reduced cytochrome b5 to introduce the first double bond into saturated fatty acyl-CoA substrates. Catalyzes the insertion of a cis double bond at the delta-9 position into fatty acyl-CoA substrates including palmitoyl-CoA and stearoyl-CoA. Gives rise to a mixture of 16:1 and 18:1 unsaturated fatty acids. Involved in neuronal cell proliferation and differentiation through down-regulation of EGFR/AKT/MAPK and Wnt signaling pathways. The chain is Stearoyl-CoA desaturase 5 (SCD5) from Homo sapiens (Human).